A 22-amino-acid chain; its full sequence is Phenol-soluble modulin alpha 3 peptide (22 aa).

The protein belongs to the phenol-soluble modulin alpha peptides family.

Functionally, peptide which can recruit, activate and subsequently lyse human neutrophils, thus eliminating the main cellular defense against infection. The polypeptide is Phenol-soluble modulin alpha 3 peptide (psmA3) (Staphylococcus aureus (strain Mu3 / ATCC 700698)).